A 688-amino-acid chain; its full sequence is Protein sel-1 homolog 2 (688 aa).

Positions 1-18 are cleaved as a signal peptide; sequence MNPLALLVEILIIIEVTT. The Extracellular segment spans residues 19-662; the sequence is KNTEAERYNR…KWKWLKLDST (644 aa). An N-linked (GlcNAc...) asparagine glycan is attached at asparagine 34. Sel1-like repeat units lie at residues 107 to 142, 143 to 178, 179 to 214, 215 to 250, 297 to 333, 334 to 370, 371 to 406, 407 to 442, 443 to 478, 551 to 586, and 588 to 623; these read GDELFKMGNKILQESKSQKQKTEAYTLFTRAANMGN, LKAMEKMADAWLFGSFGMQNITAAIQLYESLAKEGS, YKAQNALGFLSSYGIGMEYDQAKALIYYTFGSAGGS, MMSQMILGYRYLSGINVLQNCEVALNHYKKVADYIA, VQIQVSLGQLHLIGRKGLDQDYSKALYYFLKAAKAGS, ANAMAFIGKMYFEGNAAAPQNNATAFKYFSMAASKGN, AIGLHGLGLLYFHGKGVPVNYGEALKYFQKAAEKGW, PNAQFQLGFMYYSGSGVWKDYKLAFKYFYLASQSGQ, PLAIYYLAEMYATGTGVLRSCRTAVELYKGVCELGH, AFARVKIGDYHYYGYGTKKDYETAATHYSIAADKHH, and AQAMFNLAYMYEHGLGIAKDIHLARRLYDMAAQTSP. N-linked (GlcNAc...) asparagine glycosylation is present at asparagine 162. Residues 663 to 683 form a helical membrane-spanning segment; sequence VGPYWDLLVIGLIVAMLIFLL. Topologically, residues 684–688 are cytoplasmic; that stretch reads RNRHR.

This sequence belongs to the sel-1 family.

The protein resides in the membrane. It localises to the cell projection. The protein localises to the cilium. Its subcellular location is the nucleus speckle. The sequence is that of Protein sel-1 homolog 2 (Sel1l2) from Mus musculus (Mouse).